The following is a 358-amino-acid chain: 4-hydroxy-3-methylbut-2-en-1-yl diphosphate synthase (flavodoxin) (358 aa).

[4Fe-4S] cluster is bound by residues Cys-264, Cys-267, Cys-299, and Glu-306.

Belongs to the IspG family. [4Fe-4S] cluster serves as cofactor.

It catalyses the reaction (2E)-4-hydroxy-3-methylbut-2-enyl diphosphate + oxidized [flavodoxin] + H2O + 2 H(+) = 2-C-methyl-D-erythritol 2,4-cyclic diphosphate + reduced [flavodoxin]. It participates in isoprenoid biosynthesis; isopentenyl diphosphate biosynthesis via DXP pathway; isopentenyl diphosphate from 1-deoxy-D-xylulose 5-phosphate: step 5/6. Its function is as follows. Converts 2C-methyl-D-erythritol 2,4-cyclodiphosphate (ME-2,4cPP) into 1-hydroxy-2-methyl-2-(E)-butenyl 4-diphosphate. The sequence is that of 4-hydroxy-3-methylbut-2-en-1-yl diphosphate synthase (flavodoxin) from Helicobacter acinonychis (strain Sheeba).